The chain runs to 174 residues: Peptide methionine sulfoxide reductase MsrA (174 aa).

Cysteine 10 is an active-site residue.

The protein belongs to the MsrA Met sulfoxide reductase family.

It catalyses the reaction L-methionyl-[protein] + [thioredoxin]-disulfide + H2O = L-methionyl-(S)-S-oxide-[protein] + [thioredoxin]-dithiol. The enzyme catalyses [thioredoxin]-disulfide + L-methionine + H2O = L-methionine (S)-S-oxide + [thioredoxin]-dithiol. Has an important function as a repair enzyme for proteins that have been inactivated by oxidation. Catalyzes the reversible oxidation-reduction of methionine sulfoxide in proteins to methionine. The polypeptide is Peptide methionine sulfoxide reductase MsrA (Arthrobacter sp. (strain FB24)).